Reading from the N-terminus, the 449-residue chain is POU domain, class 5, transcription factor 1.1 (449 aa).

Disordered stretches follow at residues 79-125 and 170-233; these read ENNQ…SPPN and YPTP…PSES. The segment covering 97 to 110 has biased composition (basic and acidic residues); that stretch reads SRIKVKEEVVHETD. A compositionally biased stretch (polar residues) spans 170–180; the sequence is YPTPANQSPNT. Over residues 187–199 the composition is skewed to low complexity; sequence SSMESSRCSSTNS. A compositionally biased stretch (acidic residues) spans 224–233; sequence DNEEEVPSES. The region spanning 227-301 is the POU-specific domain; sequence EEVPSESEME…FLERWVVEAE (75 aa). The homeobox DNA-binding region spans 321 to 380; it reads KRKRRTNIENIVKGTLESYFMKCPKPGAQEMVQIAKELNMDKDVVRVWFCNRRQKGKRQG.

It belongs to the POU transcription factor family. Class-5 subfamily. In terms of assembly, interacts with components of the transcription complex that assembles on the vent2-B gene, including vent2 (via C-terminus), smad1 and smad4. Forms a repression complex on the promoters of the gsc and mix2 genes via interactions with the nodal/activin signaling pathway transducers foxh1/fast1, gtf2ird1/wbscr11 and smad2. Forms a repression complex on the promoters of the nodal/nr1 and siamois genes with the maternal factors tcf7l1/tcf3 and vegt. Highly enriched within the animal half of developing embryos within ectodermal and mesodermal regions. Expressed in the neuroectoderm at the early neurula stage, with expression initially extending to the future hindbrain/midbrain boundary, but later shifting toward the posterior pole where it persists within the tip of the tail in hatching embryos. Expressed at very low levels in the adult kidney.

It is found in the nucleus. Its function is as follows. Transcription factor that binds to the octamer motif (5'-ATTTGCAT-3'). Activates transcription when directly bound to the octamer DNA sequence, but can form repression complexes with other proteins at the promoter site to inhibit transcription. Binds to the promoter of the vent2-B gene to activate transcription when in the presence of other BMP signaling factors also bound to the promoter. Inhibits the competence of ectodermal cells to respond to BMP during embryogenesis thereby inhibiting epidermal differentiation and promoting neural induction. Antagonizes the activity of nodal/activin signaling by forming a transcriptional repression complex on the gsc and mix2 gene promoters to inhibit their transcription, and thus maintain the undifferentiated state of embryonic cells to prevent them from differentiating prematurely. Acts maternally to inhibit vegt and beta-catenin-activated gene transcription by forming a transcriptional repression complex on the nodal/nr1 and siamois promoters to inhibit their transcription. In Xenopus laevis (African clawed frog), this protein is POU domain, class 5, transcription factor 1.1 (pou5f1.1).